The primary structure comprises 259 residues: Pimeloyl-[acyl-carrier protein] methyl ester esterase (259 aa).

The region spanning 16–241 (FVMLHGWGMN…QSAHVPFISH (226 aa)) is the AB hydrolase-1 domain. Substrate is bound by residues W22, 82–83 (SM), and 143–147 (FLLLQ). The active-site Nucleophile is the S82. Residues D207 and H235 contribute to the active site. H235 provides a ligand contact to substrate.

The protein belongs to the AB hydrolase superfamily. Carboxylesterase BioH family. Monomer.

It localises to the cytoplasm. The enzyme catalyses 6-carboxyhexanoyl-[ACP] methyl ester + H2O = 6-carboxyhexanoyl-[ACP] + methanol + H(+). It functions in the pathway cofactor biosynthesis; biotin biosynthesis. Functionally, the physiological role of BioH is to remove the methyl group introduced by BioC when the pimeloyl moiety is complete. It allows to synthesize pimeloyl-ACP via the fatty acid synthetic pathway through the hydrolysis of the ester bonds of pimeloyl-ACP esters. The sequence is that of Pimeloyl-[acyl-carrier protein] methyl ester esterase from Hamiltonella defensa subsp. Acyrthosiphon pisum (strain 5AT).